Here is a 1106-residue protein sequence, read N- to C-terminus: Protein transport protein Sec31A (1106 aa).

7 WD repeats span residues 4-47, 68-111, 120-160, 166-206, 209-254, 258-298, and 301-342; these read KEVD…EIFE, RYHK…AGDK, KHTG…TPMT, QPPE…PIIK, DHSN…SPLR, NHAR…VLYE, and TNTQ…DGLR. An interaction with SEC13 region spans residues 161–471; that stretch reads PGAKTQPPED…IDASQTEFEK (311 aa). One copy of the WD 8; interaction with SEC13 repeat lies at 397–430; it reads SFSFGGKLVTFENVRMPSHQGAEQQQQQHHVFIS. Ser-527 and Ser-532 each carry phosphoserine. Lys-647 is covalently cross-linked (Glycyl lysine isopeptide (Lys-Gly) (interchain with G-Cter in ubiquitin)). Ser-799 bears the Phosphoserine mark. Positions 800-999 are interaction with PDCD6; that stretch reads PKIPYEEQQL…TKKITKKPIP (200 aa). The short motif at 842–848 is the ALG-2-binding site motif-2 (ABS-2) element; the sequence is GFIMHGN. A disordered region spans residues 859–980; that stretch reads TSPGHMHTQV…EGAPGAPIGN (122 aa). The segment covering 917–939 has biased composition (polar residues); that stretch reads PQSQMLQQQPSAPVPLSSQSSFP. Thr-1047 bears the Phosphothreonine mark. Position 1049 is a phosphoserine (Ser-1049). Lys-1103 is covalently cross-linked (Glycyl lysine isopeptide (Lys-Gly) (interchain with G-Cter in ubiquitin)).

Belongs to the WD repeat SEC31 family. COPII is composed of at least 5 proteins: the SEC23/24 complex, the SEC13/31 complex and SAR1. SEC13 and SEC31 make a 2:2 tetramer that forms the edge element of the COPII outer coat. The tetramer self-assembles in multiple copies to form the complete polyhedral cage. Interacts (via WD 8) with SEC13. Interacts with PDCD6; interaction takes place in response to cytosolic calcium increase and leads to bridge together the BCR(KLHL12) complex and SEC31A, leading to monoubiquitination. Interacts with KLHL12. Post-translationally, monoubiquitinated by the BCR(KLHL12) E3 ubiquitin ligase complex, leading to regulate the size of COPII coats.

It is found in the cytoplasm. It localises to the cytoplasmic vesicle. Its subcellular location is the COPII-coated vesicle membrane. The protein localises to the endoplasmic reticulum membrane. Functionally, component of the coat protein complex II (COPII) which promotes the formation of transport vesicles from the endoplasmic reticulum (ER). The coat has two main functions, the physical deformation of the endoplasmic reticulum membrane into vesicles and the selection of cargo molecules. The sequence is that of Protein transport protein Sec31A (SEC31A) from Pongo abelii (Sumatran orangutan).